The primary structure comprises 444 residues: Elongation factor 1-alpha (444 aa).

The 222-residue stretch at 15 to 236 (KPHINLAVVG…VLDTFQPPPR (222 aa)) folds into the tr-type G domain. The tract at residues 24–31 (GHVDNGKS) is G1. Residue 24–31 (GHVDNGKS) participates in GTP binding. Serine 31 is a Mg(2+) binding site. A G2 region spans residues 80 to 84 (GVTIE). The G3 stretch occupies residues 101–104 (DLPG). GTP-binding positions include 101-105 (DLPGH) and 163-166 (NKMD). A G4 region spans residues 163–166 (NKMD). The tract at residues 202-204 (SAI) is G5.

The protein belongs to the TRAFAC class translation factor GTPase superfamily. Classic translation factor GTPase family. EF-Tu/EF-1A subfamily.

The protein localises to the cytoplasm. The enzyme catalyses GTP + H2O = GDP + phosphate + H(+). Functionally, GTP hydrolase that promotes the GTP-dependent binding of aminoacyl-tRNA to the A-site of ribosomes during protein biosynthesis. This chain is Elongation factor 1-alpha, found in Pyrobaculum calidifontis (strain DSM 21063 / JCM 11548 / VA1).